The primary structure comprises 207 residues: Small ribosomal subunit protein uS4 (207 aa).

Positions 31–53 are disordered; the sequence is KAKFDSKPGQHGRTSGARTSDFG. Positions 97–157 constitute an S4 RNA-binding domain; it reads SRLDNVVYRM…EKSKKQARIV (61 aa).

The protein belongs to the universal ribosomal protein uS4 family. As to quaternary structure, part of the 30S ribosomal subunit. Contacts protein S5. The interaction surface between S4 and S5 is involved in control of translational fidelity.

Functionally, one of the primary rRNA binding proteins, it binds directly to 16S rRNA where it nucleates assembly of the body of the 30S subunit. With S5 and S12 plays an important role in translational accuracy. The polypeptide is Small ribosomal subunit protein uS4 (Paracidovorax citrulli (strain AAC00-1) (Acidovorax citrulli)).